Consider the following 397-residue polypeptide: Mannonate dehydratase (397 aa).

This sequence belongs to the mannonate dehydratase family. Fe(2+) serves as cofactor. The cofactor is Mn(2+).

It catalyses the reaction D-mannonate = 2-dehydro-3-deoxy-D-gluconate + H2O. The protein operates within carbohydrate metabolism; pentose and glucuronate interconversion. Functionally, catalyzes the dehydration of D-mannonate. In Yersinia pseudotuberculosis serotype O:1b (strain IP 31758), this protein is Mannonate dehydratase.